Consider the following 1168-residue polypeptide: Transcription-repair-coupling factor (1168 aa).

The 162-residue stretch at 633 to 794 folds into the Helicase ATP-binding domain; that stretch reads DMQKSRPMDR…MLGVRDLSVI (162 aa). Residue 646–653 participates in ATP binding; sequence GDVGYGKT. Residues 747–750 carry the DEEQ box motif; sequence DEEQ. Residues 808–969 form the Helicase C-terminal domain; the sequence is VLEQNMSFIK…GFKIAMRDLN (162 aa).

The protein in the N-terminal section; belongs to the UvrB family. This sequence in the C-terminal section; belongs to the helicase family. RecG subfamily.

The protein resides in the cytoplasm. Functionally, couples transcription and DNA repair by recognizing RNA polymerase (RNAP) stalled at DNA lesions. Mediates ATP-dependent release of RNAP and its truncated transcript from the DNA, and recruitment of nucleotide excision repair machinery to the damaged site. In Staphylococcus aureus (strain MSSA476), this protein is Transcription-repair-coupling factor.